The following is a 505-amino-acid chain: Buccalin (505 aa).

The N-terminal stretch at 1–25 is a signal peptide; that stretch reads MAHHRGHRHILLYVSLALSLGLALA. The propeptide occupies 26-62; that stretch reads EDATDPSDDTGSFDDVEAVSEEADLDPYSMSQELNKR. Residue Val74 is modified to Valine amide. Leucine amide occurs at positions 88 and 102. Gln106 carries the pyrrolidone carboxylic acid modification. Ile116 carries the isoleucine amide modification. Residues Leu129, Leu143, Leu157, Leu171, Leu185, Leu199, Leu213, Leu227, Leu241, Leu254, Leu267, Leu281, Leu294, Leu307, Leu321, and Leu335 each carry the leucine amide modification. A Glutamic acid 1-amide modification is found at Glu349. Leucine amide occurs at positions 363, 377, 391, 405, 419, and 433. 2 positions are modified to isoleucine amide: Ile447 and Ile461. Gln465 bears the Pyrrolidone carboxylic acid mark. Positions 472 to 505 are disordered; sequence SGRLGKRSSSEQEEEDVRQVEKRSTTEEQSSKSL. Residue Leu475 is modified to Leucine amide. The span at 488–505 shows a compositional bias: basic and acidic residues; sequence VRQVEKRSTTEEQSSKSL. The propeptide occupies 495–505; it reads STTEEQSSKSL.

As to expression, cholinergic motor neuron B15 innervating buccal muscles in Aplysia.

The protein localises to the secreted. Functionally, modulatory neuropeptide, acting presynaptically on nerve terminals to inhibit acetylcholine release. In Aplysia californica (California sea hare), this protein is Buccalin.